Here is a 287-residue protein sequence, read N- to C-terminus: 3-methyl-2-oxobutanoate hydroxymethyltransferase (287 aa).

Mg(2+)-binding residues include D57 and D96. 3-methyl-2-oxobutanoate is bound by residues 57 to 58 (DS), D96, and K125. E127 is a binding site for Mg(2+). The active-site Proton acceptor is E194.

This sequence belongs to the PanB family. Homodecamer; pentamer of dimers. The cofactor is Mg(2+).

The protein localises to the cytoplasm. It catalyses the reaction 3-methyl-2-oxobutanoate + (6R)-5,10-methylene-5,6,7,8-tetrahydrofolate + H2O = 2-dehydropantoate + (6S)-5,6,7,8-tetrahydrofolate. It participates in cofactor biosynthesis; (R)-pantothenate biosynthesis; (R)-pantoate from 3-methyl-2-oxobutanoate: step 1/2. Catalyzes the reversible reaction in which hydroxymethyl group from 5,10-methylenetetrahydrofolate is transferred onto alpha-ketoisovalerate to form ketopantoate. This is 3-methyl-2-oxobutanoate hydroxymethyltransferase from Methylobacterium sp. (strain 4-46).